A 223-amino-acid chain; its full sequence is Deoxyribose-phosphate aldolase (223 aa).

The active-site Proton donor/acceptor is the D92. K154 serves as the catalytic Schiff-base intermediate with acetaldehyde. K182 functions as the Proton donor/acceptor in the catalytic mechanism.

Belongs to the DeoC/FbaB aldolase family. DeoC type 1 subfamily.

The protein resides in the cytoplasm. The catalysed reaction is 2-deoxy-D-ribose 5-phosphate = D-glyceraldehyde 3-phosphate + acetaldehyde. It participates in carbohydrate degradation; 2-deoxy-D-ribose 1-phosphate degradation; D-glyceraldehyde 3-phosphate and acetaldehyde from 2-deoxy-alpha-D-ribose 1-phosphate: step 2/2. Functionally, catalyzes a reversible aldol reaction between acetaldehyde and D-glyceraldehyde 3-phosphate to generate 2-deoxy-D-ribose 5-phosphate. The sequence is that of Deoxyribose-phosphate aldolase from Pasteurella multocida (strain Pm70).